The primary structure comprises 207 residues: ATP-dependent Clp protease proteolytic subunit (207 aa).

The active-site Nucleophile is Ser111. His136 is an active-site residue.

The protein belongs to the peptidase S14 family. As to quaternary structure, fourteen ClpP subunits assemble into 2 heptameric rings which stack back to back to give a disk-like structure with a central cavity, resembling the structure of eukaryotic proteasomes.

It localises to the cytoplasm. It catalyses the reaction Hydrolysis of proteins to small peptides in the presence of ATP and magnesium. alpha-casein is the usual test substrate. In the absence of ATP, only oligopeptides shorter than five residues are hydrolyzed (such as succinyl-Leu-Tyr-|-NHMec, and Leu-Tyr-Leu-|-Tyr-Trp, in which cleavage of the -Tyr-|-Leu- and -Tyr-|-Trp bonds also occurs).. In terms of biological role, cleaves peptides in various proteins in a process that requires ATP hydrolysis. Has a chymotrypsin-like activity. Plays a major role in the degradation of misfolded proteins. The polypeptide is ATP-dependent Clp protease proteolytic subunit (Yersinia pseudotuberculosis serotype O:1b (strain IP 31758)).